The primary structure comprises 83 residues: Hainantoxin-III (83 aa).

An N-terminal signal peptide occupies residues 1-21 (MKASMFLALAGLVLLFVVGYA). A propeptide spanning residues 22 to 48 (SESEEKEFPRELLSKIFALDDFKGEER) is cleaved from the precursor. 3 disulfide bridges follow: Cys50–Cys65, Cys57–Cys70, and Cys64–Cys77. Leu81 carries the leucine amide modification.

Belongs to the neurotoxin 10 (Hwtx-1) family. 15 (Hntx-3) subfamily. As to quaternary structure, monomer. In terms of tissue distribution, expressed by the venom gland.

Its subcellular location is the secreted. In terms of biological role, selective antagonist of neuronal tetrodotoxin (TTX)-sensitive voltage-gated sodium channels (IC(50)=1270 nM on Nav1.1/SCN1A, 270 nM on Nav1.2/SCN2A, 491 nM on Nav1.3/SCN3A and 232 nM on Nav1.7/SCN9A). This toxin suppress Nav1.7 current amplitude without significantly altering the activation, inactivation, and repriming kinetics. Short extreme depolarizations partially activate the toxin-bound channel, indicating voltage-dependent inhibition of this toxin. This toxin increases the deactivation of the Nav1.7 current after extreme depolarizations. The toxin-Nav1.7 complex is gradually dissociated upon prolonged strong depolarizations in a voltage-dependent manner, and the unbound toxin rebinds to Nav1.7 after a long repolarization. Moreover, analysis of chimeric channels showed that the DIIS3-S4 linker is critical for toxin binding to Nav1.7. These data are consistent with this toxin interacting with Nav1.7 site 4 and trapping the domain II voltage sensor in the closed state. The sequence is that of Hainantoxin-III from Cyriopagopus hainanus (Chinese bird spider).